Consider the following 251-residue polypeptide: GTP cyclohydrolase 1 type 2 homolog (251 aa).

A divalent metal cation-binding residues include His64, His65, Asp102, His219, and Glu223.

It belongs to the GTP cyclohydrolase I type 2/NIF3 family. In terms of assembly, homohexamer.

The protein is GTP cyclohydrolase 1 type 2 homolog of Chlamydia pneumoniae (Chlamydophila pneumoniae).